A 245-amino-acid polypeptide reads, in one-letter code: Dehydrogenase/reductase SDR family member 6 (245 aa).

NAD(+) is bound by residues 16–18 (QGI), Asp37, and Asp58. Arg144 is a binding site for substrate. Tyr147 functions as the Proton acceptor in the catalytic mechanism. NAD(+)-binding positions include Lys151 and 180–184 (VDTPS). Positions 188 and 205 each coordinate substrate.

This sequence belongs to the short-chain dehydrogenases/reductases (SDR) family. In terms of assembly, homotetramer.

It is found in the cytoplasm. The enzyme catalyses cis-4-hydroxy-L-proline + NAD(+) = 4-oxo-L-proline + NADH + H(+). It carries out the reaction (R)-3-hydroxybutanoate + NAD(+) = acetoacetate + NADH + H(+). Its pathway is amino-acid metabolism. It participates in siderophore biosynthesis. NAD(H)-dependent dehydrogenase/reductase with a preference for cyclic substrates. Catalyzes stereoselective conversion of 4-oxo-L-proline to cis-4-hydroxy-L-proline, likely a detoxification mechanism for ketoprolines. Mediates the formation of 2,5-dihydroxybenzoate (2,5-DHBA), a siderophore that chelates free cytoplasmic iron, thereby regulating iron transport and homeostasis while protecting cells against free radical-induced oxidative stress. The iron-siderophore complex is imported into mitochondria, providing an iron source for mitochondrial metabolic processes in particular heme synthesis. May act as a 3-hydroxybutyrate dehydrogenase. This is Dehydrogenase/reductase SDR family member 6 (bdh2) from Aquarana catesbeiana (American bullfrog).